The primary structure comprises 892 residues: Alpha-actinin-1 (892 aa).

Position 1 is an N-acetylmethionine (Met1). The interval 1–247 (MDHYDSQQTN…IMTYVSSFYH (247 aa)) is actin-binding. Ser6 carries the phosphoserine modification. Tyr12 carries the phosphotyrosine; by FAK1 modification. Calponin-homology (CH) domains are found at residues 31-135 (KQQR…LRFA) and 144-250 (TSAK…HAFS). Residues Lys95 and Lys195 each carry the N6-acetyllysine modification. Spectrin repeat units lie at residues 274-384 (QLME…WLLN), 394-499 (HLAE…ALER), 509-620 (QLYL…ALTE), and 630-733 (RLRK…EVEN). The segment at 274-733 (QLMEDYEKLA…IARTINEVEN (460 aa)) is interaction with DDN. Ser471 bears the Phosphoserine mark. Residue Lys676 is modified to N6-acetyllysine. Ser677 bears the Phosphoserine mark. EF-hand domains are found at residues 746-781 (EQMNEFRASFNHFDRDHSGTLGPEEFKACLISLGYD) and 787-822 (QGEAEFARIMSIVDPNRLGVVTFQAFIDFMSRETAD). Ca(2+) contacts are provided by Asp759, Asp761, Ser763, Thr765, and Glu770. Phosphoserine is present on Ser890.

Belongs to the alpha-actinin family. In terms of assembly, homodimer; antiparallel. Interacts with MYOZ2, TTID and LPP. Interacts with DDN. Interacts with PSD. Interacts with MICALL2. Interacts with DNM2 and CTTN. Interacts with PDLIM1. Interacts with PDLIM2. Interacts with PDLIM4 (via PDZ domain). Interacts with IGSF8.

It is found in the cytoplasm. The protein localises to the cytoskeleton. Its subcellular location is the myofibril. The protein resides in the sarcomere. It localises to the z line. It is found in the cell membrane. The protein localises to the cell junction. Its subcellular location is the cell projection. The protein resides in the ruffle. In terms of biological role, F-actin cross-linking protein which is thought to anchor actin to a variety of intracellular structures. Association with IGSF8 regulates the immune synapse formation and is required for efficient T-cell activation. The chain is Alpha-actinin-1 (Actn1) from Rattus norvegicus (Rat).